Consider the following 466-residue polypeptide: Adenosylhomocysteinase (466 aa).

Substrate is bound by residues T57, D132, and E192. An NAD(+)-binding site is contributed by 193 to 195; that stretch reads TTT. Substrate contacts are provided by K222 and D226. Residues N227, 256-261, E279, N314, 335-337, and N380 contribute to the NAD(+) site; these read GYGDVG and IGH.

This sequence belongs to the adenosylhomocysteinase family. NAD(+) serves as cofactor.

It is found in the cytoplasm. It catalyses the reaction S-adenosyl-L-homocysteine + H2O = L-homocysteine + adenosine. Its pathway is amino-acid biosynthesis; L-homocysteine biosynthesis; L-homocysteine from S-adenosyl-L-homocysteine: step 1/1. May play a key role in the regulation of the intracellular concentration of adenosylhomocysteine. The protein is Adenosylhomocysteinase of Rhizobium leguminosarum bv. trifolii (strain WSM2304).